The chain runs to 434 residues: Eukaryotic translation initiation factor 3 subunit E (434 aa).

The PCI domain occupies 219–392; that stretch reads FFNHPKGRDL…GHVVMGTQPL (174 aa).

It belongs to the eIF-3 subunit E family. As to quaternary structure, component of the eukaryotic translation initiation factor 3 (eIF-3) complex. The eIF-3 complex interacts with pix. Interacts with mxt.

Its subcellular location is the cytoplasm. Its function is as follows. Component of the eukaryotic translation initiation factor 3 (eIF-3) complex, which is involved in protein synthesis of a specialized repertoire of mRNAs and, together with other initiation factors, stimulates binding of mRNA and methionyl-tRNAi to the 40S ribosome. The eIF-3 complex specifically targets and initiates translation of a subset of mRNAs involved in cell proliferation. This Drosophila grimshawi (Hawaiian fruit fly) protein is Eukaryotic translation initiation factor 3 subunit E (eIF3-S6).